The chain runs to 211 residues: Large ribosomal subunit protein bL25 (211 aa).

The disordered stretch occupies residues 188–211 (APKAAKVSTDDEAAAPAEEAPAAE). Positions 201-211 (AAPAEEAPAAE) are enriched in low complexity.

It belongs to the bacterial ribosomal protein bL25 family. CTC subfamily. As to quaternary structure, part of the 50S ribosomal subunit; part of the 5S rRNA/L5/L18/L25 subcomplex. Contacts the 5S rRNA. Binds to the 5S rRNA independently of L5 and L18.

This is one of the proteins that binds to the 5S RNA in the ribosome where it forms part of the central protuberance. In Colwellia psychrerythraea (strain 34H / ATCC BAA-681) (Vibrio psychroerythus), this protein is Large ribosomal subunit protein bL25.